Consider the following 101-residue polypeptide: Large ribosomal subunit protein uL24 (101 aa).

Belongs to the universal ribosomal protein uL24 family. As to quaternary structure, part of the 50S ribosomal subunit.

Its function is as follows. One of two assembly initiator proteins, it binds directly to the 5'-end of the 23S rRNA, where it nucleates assembly of the 50S subunit. Functionally, one of the proteins that surrounds the polypeptide exit tunnel on the outside of the subunit. This Streptococcus mutans serotype c (strain ATCC 700610 / UA159) protein is Large ribosomal subunit protein uL24.